The sequence spans 125 residues: Cyclin-dependent protein kinase inhibitor SMR16 (125 aa).

In terms of biological role, probable cyclin-dependent protein kinase (CDK) inhibitor that functions as a repressor of mitosis in the endoreduplication cell cycle. The sequence is that of Cyclin-dependent protein kinase inhibitor SMR16 from Arabidopsis thaliana (Mouse-ear cress).